Consider the following 192-residue polypeptide: 7-methyl-GTP pyrophosphatase (192 aa).

The Proton acceptor role is filled by aspartate 70.

The protein belongs to the Maf family. YceF subfamily. Requires a divalent metal cation as cofactor.

The protein resides in the cytoplasm. It carries out the reaction N(7)-methyl-GTP + H2O = N(7)-methyl-GMP + diphosphate + H(+). Its function is as follows. Nucleoside triphosphate pyrophosphatase that hydrolyzes 7-methyl-GTP (m(7)GTP). May have a dual role in cell division arrest and in preventing the incorporation of modified nucleotides into cellular nucleic acids. This Xanthomonas campestris pv. campestris (strain 8004) protein is 7-methyl-GTP pyrophosphatase.